The following is a 274-amino-acid chain: MAHYFVGDIQGCFAELQKLLAKVDFNPSRDELWAVGDLVARGPDSLATLRFFRSLGDSAKTVLGNHDLHLMALHGKLKRAKPSDNLTEILESPDISASIDWLRQQPLMRELPEHQLIMSHAGVPPQWSLEVLREEAALVSCALKQDDYLEALISQMYSDSAEQWDPSAIGIERLRYCINALTRMRYLYVDGRLDFDCKQPPENCTNPQLKPWFEFASPLRQSHTLVFGHWAALMGNVGDSKLKALDTGCCWGEHLTLWHLEKDQKITQKKLKKS.

It belongs to the Ap4A hydrolase family.

The enzyme catalyses P(1),P(4)-bis(5'-adenosyl) tetraphosphate + H2O = 2 ADP + 2 H(+). Functionally, hydrolyzes diadenosine 5',5'''-P1,P4-tetraphosphate to yield ADP. This Shewanella baltica (strain OS195) protein is Bis(5'-nucleosyl)-tetraphosphatase, symmetrical.